The following is a 201-amino-acid chain: UPF0301 protein ROP_34500 (201 aa).

This sequence belongs to the UPF0301 (AlgH) family.

The chain is UPF0301 protein ROP_34500 from Rhodococcus opacus (strain B4).